The chain runs to 384 residues: Calreticulin-3 (384 aa).

Positions 1-19 are cleaved as a signal peptide; sequence MARALVQLWAICMLRVALA. Residues 20–197 form an N-domain region; the sequence is TVYFQEEFLD…GQSIESGSIE (178 aa). Residue N42 is glycosylated (N-linked (GlcNAc...) asparagine). C105 and C137 are joined by a disulfide. Positions 109, 111, 128, and 135 each coordinate an alpha-D-glucoside. 7 repeat units span residues 191–202, 208–219, 221–230, 234–245, 249–259, 263–271, and 273–283. The tract at residues 191-245 is 4 X approximate repeats; the sequence is IESGSIEYDWNLTSLKKETSPAESKDWEQTKDNKAQDWEKHFLDASTSKQSDWNG. The interval 198–294 is P-domain; sequence YDWNLTSLKK…YLTQYDLSEF (97 aa). The N-linked (GlcNAc...) asparagine glycan is linked to N201. The 3 X approximate repeats stretch occupies residues 249 to 283; it reads GDWPAPMLQKPPYQDGLKPEGIHKDVWLHRKMKNT. Residues 295 to 384 are C-domain; it reads ENIGAIGLEL…FNQFHRRNEL (90 aa). Residue E303 participates in an alpha-D-glucoside binding. Residues 381-384 carry the Prevents secretion from ER motif; that stretch reads RNEL.

It belongs to the calreticulin family. As to quaternary structure, component of an EIF2 complex at least composed of CELF1/CUGBP1, CALR, CALR3, EIF2S1, EIF2S2, HSP90B1 and HSPA5. As to expression, testis specific.

The protein localises to the endoplasmic reticulum lumen. Its function is as follows. During spermatogenesis, may act as a lectin-independent chaperone for specific client proteins such as ADAM3. Required for sperm fertility. CALR3 capacity for calcium-binding may be absent or much lower than that of CALR. The chain is Calreticulin-3 (CALR3) from Homo sapiens (Human).